Consider the following 433-residue polypeptide: Protein translocase subunit SecY (433 aa).

The next 10 helical transmembrane spans lie at 17 to 37 (IVFTILILIVCRFGSFIPIPG), 71 to 91 (IFALAIMPYITASIIIQLMSV), 117 to 137 (LTVLLASFQAYGVAISLESIV), 141 to 161 (GPVVILAGFFFRVTTVITLVV), 184 to 204 (LIIFIGIISGVPSAIISMFEL), 212 to 232 (PLIALAVCIGVVVLIAIIIFF), 268 to 288 (GVIPPIFASSILLFPATLANF), 310 to 330 (YILLYVALIMFFSFFYTAIVF), 366 to 386 (LTVIGGIYLSVICVIPELLMN), and 388 to 408 (YVISLSLGGTSFLIVVNVVLD).

This sequence belongs to the SecY/SEC61-alpha family. In terms of assembly, component of the Sec protein translocase complex. Heterotrimer consisting of SecY, SecE and SecG subunits. The heterotrimers can form oligomers, although 1 heterotrimer is thought to be able to translocate proteins. Interacts with the ribosome. Interacts with SecDF, and other proteins may be involved. Interacts with SecA.

It localises to the cell inner membrane. The central subunit of the protein translocation channel SecYEG. Consists of two halves formed by TMs 1-5 and 6-10. These two domains form a lateral gate at the front which open onto the bilayer between TMs 2 and 7, and are clamped together by SecE at the back. The channel is closed by both a pore ring composed of hydrophobic SecY resides and a short helix (helix 2A) on the extracellular side of the membrane which forms a plug. The plug probably moves laterally to allow the channel to open. The ring and the pore may move independently. The sequence is that of Protein translocase subunit SecY from Rickettsia felis (strain ATCC VR-1525 / URRWXCal2) (Rickettsia azadi).